Consider the following 396-residue polypeptide: Elongation factor Tu (396 aa).

The 196-residue stretch at 10–205 (KEHVNIGTIG…AVDNYIETPV (196 aa)) folds into the tr-type G domain. Residues 19-26 (GHVDHGKT) form a G1 region. GTP is bound at residue 19 to 26 (GHVDHGKT). Thr26 is a binding site for Mg(2+). Positions 60 to 64 (GITIN) are G2. Residues 81-84 (DCPG) form a G3 region. Residues 81–85 (DCPGH) and 136–139 (NKVD) contribute to the GTP site. Positions 136–139 (NKVD) are G4. The interval 175-177 (SAL) is G5.

The protein belongs to the TRAFAC class translation factor GTPase superfamily. Classic translation factor GTPase family. EF-Tu/EF-1A subfamily. As to quaternary structure, monomer.

Its subcellular location is the cytoplasm. The catalysed reaction is GTP + H2O = GDP + phosphate + H(+). Functionally, GTP hydrolase that promotes the GTP-dependent binding of aminoacyl-tRNA to the A-site of ribosomes during protein biosynthesis. This chain is Elongation factor Tu, found in Mycoplasmopsis pulmonis (strain UAB CTIP) (Mycoplasma pulmonis).